Reading from the N-terminus, the 169-residue chain is MAHCFFDMTIGGQPAGRIIMELFPDVPKTAENFRALCTGEKGIGPSGKKMTYEGSVFHRVIPKFMLQGGDFTLGNGRGGESIYGAKFADENFIHKHTTPGLLSMANAGPGTNGSQFFITTVATPHLDGKHVVFGKVVEGMDVVRKIEATQTDRGDKPLSEVKIAKCGQL.

The PPIase cyclophilin-type domain occupies phenylalanine 5–glutamine 168.

It belongs to the cyclophilin-type PPIase family.

The protein resides in the cytoplasm. It catalyses the reaction [protein]-peptidylproline (omega=180) = [protein]-peptidylproline (omega=0). With respect to regulation, binds cyclosporin A (CsA). CsA mediates some of its effects via an inhibitory action on PPIase. Its function is as follows. PPIases accelerate the folding of proteins. It catalyzes the cis-trans isomerization of proline imidic peptide bonds in oligopeptides. The polypeptide is Peptidyl-prolyl cis-trans isomerase (Unspecified eudicot DB-1992).